The sequence spans 392 residues: GDP-mannose transporter (392 aa).

Basic and acidic residues predominate over residues 1 to 11 (MDDKKNEDLEM). A disordered region spans residues 1 to 25 (MDDKKNEDLEMRNFNGRSSPSQRDP). At 1–45 (MDDKKNEDLEMRNFNGRSSPSQRDPFLAKPGAAAKRGNSAFDLSN) the chain is on the cytoplasmic side. The helical transmembrane segment at 46-66 (VTNSPGISILAYCLASISMTV) threads the bilayer. Residues 67-76 (TNKYCVSGSN) are Lumenal-facing. The chain crosses the membrane as a helical span at residues 77–97 (WNLNFFYLAIQSVVCIIAIII). Over 98-116 (CKQAGLITNLAPFDTKKAK) the chain is Cytoplasmic. Residues 117 to 139 (TWFPISLLLVGMIYTSTKALQFL) form a helical membrane-spanning segment. The Lumenal portion of the chain corresponds to 140–142 (SVP). The chain crosses the membrane as a helical span at residues 143–165 (VYTIFKNLTIIVIAYGEVLWFGG). At 166–171 (SVTPSA) the chain is on the cytoplasmic side. A helical transmembrane segment spans residues 172–191 (LFSFGLMVLSSVVAAWADIQ). Residues 192–210 (HALYGGGAAQSAEAAAALS) lie on the Lumenal side of the membrane. Residues 211–231 (TLNAGYAWMGMNVFCTAAYVL) form a helical membrane-spanning segment. Over 232–246 (SMRKVIKKMNFKDWD) the chain is Cytoplasmic. The chain crosses the membrane as a helical span at residues 247 to 267 (TMFYNNLLTIPVLFVCSFIFE). N-linked (GlcNAc...) asparagine glycans are attached at residues Asn268 and Asn273. At 268-285 (NWSSENLTKNFPLETRNN) the chain is on the lumenal side. Residues 286 to 306 (LILGMIYSGLATIFISYCSAW) traverse the membrane as a helical segment. Residues 307 to 314 (CIRVTSST) are Cytoplasmic-facing. Residues 315-337 (TYSMVGALNKLPIAVSGLVFFAA) traverse the membrane as a helical segment. Topologically, residues 338 to 340 (PVT) are lumenal. A helical transmembrane segment spans residues 341 to 360 (FGSVSAIFIGFVSGIVYAWA). The Cytoplasmic segment spans residues 361–392 (KVRQNQSKGNILPTTQPVMSASSQSNRDAAKA). Residues 373-392 (PTTQPVMSASSQSNRDAAKA) are disordered.

It belongs to the TPT transporter family. SLC35D subfamily. As to quaternary structure, homooligomer.

The protein resides in the golgi apparatus membrane. It is found in the cytoplasmic vesicle membrane. The protein localises to the endoplasmic reticulum membrane. Involved in the import of GDP-mannose from the cytoplasm into the Golgi lumen. The polypeptide is GDP-mannose transporter (gmt1) (Botryotinia fuckeliana (strain B05.10) (Noble rot fungus)).